The sequence spans 407 residues: Phospholipid-transporting ATPase accessory subunit CDC50 (407 aa).

A disordered region spans residues 1–33 (MAPRRRRGAGQDGSDDGRSDSDAPKNRPPNTAF). Topologically, residues 1 to 48 (MAPRRRRGAGQDGSDDGRSDSDAPKNRPPNTAFRQQRMRAWQCVLTPK) are cytoplasmic. Residues 15-25 (DDGRSDSDAPK) are compositionally biased toward basic and acidic residues. Residues 49 to 69 (LIVTVFSILAAIYLGFGAWLT) traverse the membrane as a helical segment. At 70-359 (YLAHTVRDLK…TMGSRNIWPG (290 aa)) the chain is on the extracellular side. Cysteine 85 and cysteine 139 form a disulfide bridge. Residues asparagine 131 and asparagine 189 are each glycosylated (N-linked (GlcNAc...) asparagine). The cysteines at positions 193 and 210 are disulfide-linked. Residues asparagine 219, asparagine 232, asparagine 241, and asparagine 314 are each glycosylated (N-linked (GlcNAc...) asparagine). The chain crosses the membrane as a helical span at residues 360-380 (IIFLIVGGICLVLDIYFILSF). Residues 381-407 (FIWRPRKLGDPSYLSWNQPSAPGGHSS) are Cytoplasmic-facing.

Belongs to the CDC50/LEM3 family. Component of a flippase complex consisting of DNF1 and CDC50. Interacts with DNF1; the interaction is direct.

It is found in the cell membrane. Functionally, accessory component of a P4-ATPase flippase complex which catalyzes the hydrolysis of ATP coupled to the transport of phosphatidylcholine and phosphatidylserine from the lumen to the cytosolic leaflet of membranes and ensures the maintenance of asymmetric distribution of phospholipids. The chain is Phospholipid-transporting ATPase accessory subunit CDC50 from Chaetomium thermophilum (strain DSM 1495 / CBS 144.50 / IMI 039719) (Thermochaetoides thermophila).